The following is a 1906-amino-acid chain: Myosin light chain kinase, smooth muscle (1906 aa).

2 Ig-like C2-type domains span residues 28 to 117 and 156 to 244; these read PAFT…VELT and PKFA…AELT. Disordered stretches follow at residues 127–157 and 309–453; these read SLPS…SPPK and ETFY…SKVS. The segment covering 309–321 has biased composition (basic and acidic residues); that stretch reads ETFYTSREAKDGK. Polar residues-rich tracts occupy residues 345 to 354 and 384 to 402; these read LQKTSSTITL and PLMT…QVSP. Basic and acidic residues predominate over residues 403–424; sequence RSRETENRAGVRKSVKEEKREP. Ig-like C2-type domains follow at residues 429-517, 521-613, 637-725, and 735-830; these read PQFE…WLLT, PKVE…AQVT, PIFL…ATLT, and PWFI…SSAS. One copy of the IIA-1 repeat lies at 660–676; sequence VSANPCPEIIWLHNGKE. The segment at 660–1833 is 4 X repeats, motif IIA; sequence VSANPCPEII…EVMWYKDDQP (1174 aa). An IIB-1 repeat occupies 693-708; sequence SLYIQEVFPEDTGKYT. The 5 X repeats, motif IIB stretch occupies residues 693 to 1866; it reads SLYIQEVFPE…VCGDDDAKYT (1174 aa). Residues 758-774 form an IIA-2 repeat; it reads IAGDPFPTVHWFKDGQE. One copy of the IIB-2 repeat lies at 791–807; sequence TLILRNVQSRHAGQYEI. Disordered regions lie at residues 831 to 881 and 947 to 1086; these read RAEM…QEDV and PKTL…APSF. Basic and acidic residues-rich tracts occupy residues 833-850 and 867-881; these read EMLR…RRDG and SSSE…QEDV. Residues 970–987 form an III-1 repeat; that stretch reads AKKGTPKTPLPEKVPPPK. The 4 X repeats, motif III stretch occupies residues 970–1226; that stretch reads AKKGTPKTPL…TPPKAATPPQ (257 aa). The span at 977-988 shows a compositional bias: pro residues; the sequence is TPLPEKVPPPKP. An III-2 repeat occupies 999 to 1016; sequence AKKKPPAENGSASTPAPN. The segment covering 1039 to 1051 has biased composition (basic and acidic residues); that stretch reads VKKEEKNDRKCEH. Residues 1061 to 1078 form an III-3 repeat; the sequence is IGKKAENKPAASKPTPPP. 2 consecutive Ig-like C2-type domains span residues 1084–1172 and 1225–1313; these read PSFT…CKVL and PQIT…VNLT. The stretch at 1107–1123 is one IIA-3 repeat; it reads ISSDPPASVSWTLDSKA. The IIB-3 repeat unit spans residues 1140-1156; that stretch reads SLTIEKVMPEDGGEYKC. Residues 1180 to 1227 are disordered; it reads KAAKPAEKKTKKPKTTLPPVLSTESSEATVKKKPAPKTPPKAATPPQI. An III-4 repeat occupies 1209–1226; that stretch reads VKKKPAPKTPPKAATPPQ. The stretch at 1281–1297 is one IIB-4 repeat; that stretch reads KLTISSTKQEHCGCYTL. The motif IA stretch occupies residues 1317-1364; the sequence is KPDPPAGTPCASDIRSSSLTLSWYGSSYDGGSAVQSYTVEIWNSVDNK. In terms of domain architecture, Fibronectin type-III spans 1321–1414; that stretch reads PAGTPCASDI…ESEVVKVGEK (94 aa). The interval 1385 to 1402 is motif IB; sequence REYKFRVRAANVYGISEP. A disordered region spans residues 1414–1433; that stretch reads KQEEELKEEEAELSDDEGKE. Residues 1415–1432 are compositionally biased toward acidic residues; it reads QEEELKEEEAELSDDEGK. In terms of domain architecture, Protein kinase spans 1453–1708; the sequence is YNIEERLGSG…CTQCLQHPWL (256 aa). Residues 1459–1467 and K1482 each bind ATP; that span reads LGSGKFGQV. The active-site Proton acceptor is the D1574. The interval 1700–1763 is calmodulin-binding; sequence TQCLQHPWLQ…SGMSGRKASG (64 aa). The tract at residues 1716 to 1728 is calmodulin autoinhibition (AM13) region; it reads EAKKLSKDRMKKY. Residues 1730–1749 form a calmodulin recognition (RS20) region region; that stretch reads ARRKWQKTGHAVRAIGRLSS. Residue S1762 is modified to Phosphoserine; by PKG. The residue at position 1768 (S1768) is a Phosphoserine; by MAPK. The Ig-like C2-type 9 domain occupies 1794–1885; sequence PYFTKTILDM…ATCTAELLVE (92 aa). One copy of the IIA-4 repeat lies at 1817–1833; that stretch reads IEGYPDPEVMWYKDDQP. One copy of the IIB-5 repeat lies at 1851–1866; it reads SLTISEVCGDDDAKYT. A disordered region spans residues 1885–1906; the sequence is ETMGKEGEGEGEGEEDEEEEEE. The span at 1893–1906 shows a compositional bias: acidic residues; that stretch reads GEGEGEEDEEEEEE.

It belongs to the protein kinase superfamily. CAMK Ser/Thr protein kinase family. All isoforms including Telokin bind calmodulin. The cofactor is Mg(2+). It depends on Ca(2+) as a cofactor. Post-translationally, the C-terminus is deglutamylated, leading to the formation of Myosin light chain kinase, smooth muscle, deglutamylated form. The C-terminus is variable, with one to five C-terminal glutamyl residues being removed producing five forms differring in their number of C-terminal glutamyl residues. In terms of processing, acetylated. Phosphorylation of telokin by PKG has no significant effect on its myosin binding activity, but promotes translocation to the membrane. Isoform telokin is expressed in gizzard, heart, lung, intestine, and skeletal muscle although the levels of the expression in the latter were much less than that in the gizzard.

It is found in the cytoplasm. The protein resides in the cytosol. Its subcellular location is the membrane. The enzyme catalyses L-seryl-[myosin light chain] + ATP = O-phospho-L-seryl-[myosin light chain] + ADP + H(+). The catalysed reaction is L-threonyl-[myosin light chain] + ATP = O-phospho-L-threonyl-[myosin light chain] + ADP + H(+). Its activity is regulated as follows. Activated by phosphorylation on Tyr-478. Isoforms which lack this tyrosine residue are not regulated in this way. All catalytically active isoforms require binding to calcium and calmodulin for activation. In terms of biological role, phosphorylates a specific serine in the N-terminus of a myosin light chain, which leads to the formation of calmodulin/MLCK signal transduction complexes which allow selective transduction of calcium signals. This is Myosin light chain kinase, smooth muscle (Mylk) from Gallus gallus (Chicken).